Here is a 143-residue protein sequence, read N- to C-terminus: FAD synthase (143 aa).

ATP contacts are provided by residues 11-12, 16-19, and aspartate 94; these read TF and HPGH.

The protein belongs to the archaeal FAD synthase family. In terms of assembly, homodimer. It depends on a divalent metal cation as a cofactor.

It carries out the reaction FMN + ATP + H(+) = FAD + diphosphate. The protein operates within cofactor biosynthesis; FAD biosynthesis; FAD from FMN: step 1/1. Catalyzes the transfer of the AMP portion of ATP to flavin mononucleotide (FMN) to produce flavin adenine dinucleotide (FAD) coenzyme. This Halomicrobium mukohataei (strain ATCC 700874 / DSM 12286 / JCM 9738 / NCIMB 13541) (Haloarcula mukohataei) protein is FAD synthase.